A 232-amino-acid chain; its full sequence is Adenosylcobinamide-GDP ribazoletransferase (232 aa).

The next 6 membrane-spanning stretches (helical) occupy residues 32 to 52, 54 to 74, 102 to 122, 126 to 146, 172 to 192, and 212 to 232; these read PIYF…GGSF, NFLL…LFHF, VGPF…TLYL, PITF…LMFF, FFLL…VVTV, and DVLG…LGVV.

Belongs to the CobS family. It depends on Mg(2+) as a cofactor.

The protein localises to the cell inner membrane. It catalyses the reaction alpha-ribazole + adenosylcob(III)inamide-GDP = adenosylcob(III)alamin + GMP + H(+). The catalysed reaction is alpha-ribazole 5'-phosphate + adenosylcob(III)inamide-GDP = adenosylcob(III)alamin 5'-phosphate + GMP + H(+). It participates in cofactor biosynthesis; adenosylcobalamin biosynthesis; adenosylcobalamin from cob(II)yrinate a,c-diamide: step 7/7. Joins adenosylcobinamide-GDP and alpha-ribazole to generate adenosylcobalamin (Ado-cobalamin). Also synthesizes adenosylcobalamin 5'-phosphate from adenosylcobinamide-GDP and alpha-ribazole 5'-phosphate. This Thermosipho melanesiensis (strain DSM 12029 / CIP 104789 / BI429) protein is Adenosylcobinamide-GDP ribazoletransferase.